A 281-amino-acid chain; its full sequence is Sulfur carrier protein FdhD (281 aa).

Cysteine 127 acts as the Cysteine persulfide intermediate in catalysis. Mo-bis(molybdopterin guanine dinucleotide) is bound at residue 264–269 (FAREGR).

It belongs to the FdhD family.

It localises to the cytoplasm. Its function is as follows. Required for formate dehydrogenase (FDH) activity. Acts as a sulfur carrier protein that transfers sulfur from IscS to the molybdenum cofactor prior to its insertion into FDH. The chain is Sulfur carrier protein FdhD from Mannheimia succiniciproducens (strain KCTC 0769BP / MBEL55E).